We begin with the raw amino-acid sequence, 88 residues long: UPF0298 protein Bcer98_2635 (88 aa).

This sequence belongs to the UPF0298 family.

It localises to the cytoplasm. This Bacillus cytotoxicus (strain DSM 22905 / CIP 110041 / 391-98 / NVH 391-98) protein is UPF0298 protein Bcer98_2635.